Reading from the N-terminus, the 418-residue chain is Translation initiation factor 2 subunit gamma (418 aa).

Residues 7–206 (QPEVNIGVVG…GIQKYIPTPQ (200 aa)) form the tr-type G domain. A G1 region spans residues 16–23 (GHVDHGKT). Asp-19, Thr-23, Gly-44, and Thr-46 together coordinate Mg(2+). Residue 19–24 (DHGKTT) participates in GTP binding. The interval 44-48 (GMTIK) is G2. 4 residues coordinate Zn(2+): Cys-59, Cys-62, Cys-74, and Cys-77. Residues 93–96 (DAPG) are G3. GTP-binding positions include 149-152 (NKVD) and 184-186 (SAL). A G4 region spans residues 149–152 (NKVD). Residues 184 to 186 (SAL) are G5.

This sequence belongs to the TRAFAC class translation factor GTPase superfamily. Classic translation factor GTPase family. EIF2G subfamily. As to quaternary structure, heterotrimer composed of an alpha, a beta and a gamma chain. Requires Mg(2+) as cofactor.

The enzyme catalyses GTP + H2O = GDP + phosphate + H(+). In terms of biological role, eIF-2 functions in the early steps of protein synthesis by forming a ternary complex with GTP and initiator tRNA. The sequence is that of Translation initiation factor 2 subunit gamma from Sulfurisphaera tokodaii (strain DSM 16993 / JCM 10545 / NBRC 100140 / 7) (Sulfolobus tokodaii).